Here is a 691-residue protein sequence, read N- to C-terminus: Elongation factor G (691 aa).

One can recognise a tr-type G domain in the interval 8–283; sequence KRVRNIGIAA…AVVAYLPAPD (276 aa). Residues 17–24, 81–85, and 135–138 each bind GTP; these read AHIDAGKT, DTPGH, and NKMD.

It belongs to the TRAFAC class translation factor GTPase superfamily. Classic translation factor GTPase family. EF-G/EF-2 subfamily.

It is found in the cytoplasm. Catalyzes the GTP-dependent ribosomal translocation step during translation elongation. During this step, the ribosome changes from the pre-translocational (PRE) to the post-translocational (POST) state as the newly formed A-site-bound peptidyl-tRNA and P-site-bound deacylated tRNA move to the P and E sites, respectively. Catalyzes the coordinated movement of the two tRNA molecules, the mRNA and conformational changes in the ribosome. The chain is Elongation factor G from Campylobacter lari (strain RM2100 / D67 / ATCC BAA-1060).